The primary structure comprises 322 residues: SQDFCTDLAVSSANFVPTVTAISTSPDLQWLVQPTLISSVAPSQNRGHPYGVPAPAPPAAYSRPAVLKAPGGRGQSIGRRGKVEQLSPEEEEKRRIRRERNKMAAAKCRNRRRELTDTLQAETDQLEEEKSALQAEIANLLKEKEKLEFILAAHRPACKMPEELRFSEELAAATALDLGAPSPAAAEEAFALPLMTEAPPAVPPKEPSGSGLELKAEPFDELLFSAGPREASRSVPDMDLPGASSFYASDWEPLGAGSGGELEPLCTPVVTCTPCPSTYTSTFVFTYPEADAFPSCAAAHRKGSSSNEPSSDSLSSPTLLAL.

A disordered region spans residues 69–95 (APGGRGQSIGRRGKVEQLSPEEEEKRR). The bZIP domain maps to 91-154 (EEKRRIRRER…EKLEFILAAH (64 aa)). The segment at 93 to 113 (KRRIRRERNKMAAAKCRNRRR) is basic motif. The leucine-zipper stretch occupies residues 119 to 147 (LQAETDQLEEEKSALQAEIANLLKEKEKL). The disordered stretch occupies residues 298-322 (AAHRKGSSSNEPSSDSLSSPTLLAL). Over residues 304 to 316 (SSSNEPSSDSLSS) the composition is skewed to low complexity.

The protein belongs to the bZIP family. Fos subfamily.

It is found in the host nucleus. In Galliformes, this protein is p55-v-Fos-transforming protein (V-FOS).